A 239-amino-acid polypeptide reads, in one-letter code: Probable transcriptional regulatory protein BC_0539 (239 aa).

Belongs to the TACO1 family. YeeN subfamily.

The protein resides in the cytoplasm. The sequence is that of Probable transcriptional regulatory protein BC_0539 from Bacillus cereus (strain ATCC 14579 / DSM 31 / CCUG 7414 / JCM 2152 / NBRC 15305 / NCIMB 9373 / NCTC 2599 / NRRL B-3711).